Consider the following 92-residue polypeptide: DNA/RNA-binding protein Alba (92 aa).

K11 is subject to N6-acetyllysine.

This sequence belongs to the histone-like Alba family. Acetylated. Acetylation at Lys-11 decreases DNA-binding affinity.

It localises to the cytoplasm. The protein localises to the chromosome. In terms of biological role, binds double-stranded DNA tightly but without sequence specificity. Involved in DNA compaction. The protein is DNA/RNA-binding protein Alba of Pyrobaculum calidifontis (strain DSM 21063 / JCM 11548 / VA1).